A 277-amino-acid chain; its full sequence is 3-methyl-2-oxobutanoate hydroxymethyltransferase (277 aa).

The Mg(2+) site is built by aspartate 54 and aspartate 93. 3-methyl-2-oxobutanoate contacts are provided by residues 54–55 (DS), aspartate 93, and lysine 122. Glutamate 124 contributes to the Mg(2+) binding site. Glutamate 191 acts as the Proton acceptor in catalysis.

It belongs to the PanB family. As to quaternary structure, homodecamer; pentamer of dimers. Mg(2+) serves as cofactor.

It is found in the cytoplasm. It catalyses the reaction 3-methyl-2-oxobutanoate + (6R)-5,10-methylene-5,6,7,8-tetrahydrofolate + H2O = 2-dehydropantoate + (6S)-5,6,7,8-tetrahydrofolate. Its pathway is cofactor biosynthesis; (R)-pantothenate biosynthesis; (R)-pantoate from 3-methyl-2-oxobutanoate: step 1/2. Functionally, catalyzes the reversible reaction in which hydroxymethyl group from 5,10-methylenetetrahydrofolate is transferred onto alpha-ketoisovalerate to form ketopantoate. This Alkalilimnicola ehrlichii (strain ATCC BAA-1101 / DSM 17681 / MLHE-1) protein is 3-methyl-2-oxobutanoate hydroxymethyltransferase.